Reading from the N-terminus, the 497-residue chain is Putative diacyglycerol O-acyltransferase MT3584 (497 aa).

His143 (proton acceptor) is an active-site residue.

This sequence belongs to the long-chain O-acyltransferase family.

It carries out the reaction an acyl-CoA + a 1,2-diacyl-sn-glycerol = a triacyl-sn-glycerol + CoA. Its pathway is glycerolipid metabolism; triacylglycerol biosynthesis. The protein is Putative diacyglycerol O-acyltransferase MT3584 of Mycobacterium tuberculosis (strain CDC 1551 / Oshkosh).